Here is a 192-residue protein sequence, read N- to C-terminus: dTTP/UTP pyrophosphatase (192 aa).

Residue D68 is the Proton acceptor of the active site.

This sequence belongs to the Maf family. YhdE subfamily. The cofactor is a divalent metal cation.

The protein resides in the cytoplasm. The enzyme catalyses dTTP + H2O = dTMP + diphosphate + H(+). It carries out the reaction UTP + H2O = UMP + diphosphate + H(+). Functionally, nucleoside triphosphate pyrophosphatase that hydrolyzes dTTP and UTP. May have a dual role in cell division arrest and in preventing the incorporation of modified nucleotides into cellular nucleic acids. The sequence is that of dTTP/UTP pyrophosphatase from Cereibacter sphaeroides (strain ATCC 17023 / DSM 158 / JCM 6121 / CCUG 31486 / LMG 2827 / NBRC 12203 / NCIMB 8253 / ATH 2.4.1.) (Rhodobacter sphaeroides).